The sequence spans 669 residues: Elongation factor G-like protein (669 aa).

The region spanning 7–279 is the tr-type G domain; it reads ESLRNVAIVG…VLIKEAPDPS (273 aa). The interval 16–23 is G1; sequence GPYGSGKT. GTP is bound at residue 16 to 23; it reads GPYGSGKT. Positions 59-63 are G2; the sequence is QMSVE. The segment at 80-83 is G3; sequence DCPG. Residues 80-84 and 134-137 contribute to the GTP site; these read DCPGS and NKMD. Residues 134–137 are G4; sequence NKMD. Positions 257 to 259 are G5; sequence AAE.

It belongs to the TRAFAC class translation factor GTPase superfamily. Classic translation factor GTPase family. EF-G/EF-2 subfamily.

This Synechocystis sp. (strain ATCC 27184 / PCC 6803 / Kazusa) protein is Elongation factor G-like protein.